A 229-amino-acid chain; its full sequence is Potassium/proton antiporter CemA (229 aa).

2 helical membrane passes run 7–27 (LASL…SISF) and 106–126 (IISH…YFIL).

Belongs to the CemA family.

The protein localises to the plastid. It is found in the chloroplast inner membrane. The catalysed reaction is K(+)(in) + H(+)(out) = K(+)(out) + H(+)(in). In terms of biological role, contributes to K(+)/H(+) antiport activity by supporting proton efflux to control proton extrusion and homeostasis in chloroplasts in a light-dependent manner to modulate photosynthesis. Prevents excessive induction of non-photochemical quenching (NPQ) under continuous-light conditions. Indirectly promotes efficient inorganic carbon uptake into chloroplasts. This Cycas taitungensis (Prince sago) protein is Potassium/proton antiporter CemA.